The following is a 513-amino-acid chain: U3 small nucleolar RNA-associated protein 15 (513 aa).

6 WD repeats span residues 37 to 78, 79 to 118, 124 to 162, 166 to 206, 210 to 247, and 250 to 294; these read KEHN…KTFS, RFKDVVYSASFRSDGKLLCAGDATGLVSVYDSYNPRTILL, THPTHVTKFHTQDNKILATASDDRVTRLWDISNAYEPQL, GATD…STPI, NHDQPVENVIAVSPTQIVSCGGNNFKVWDLTSNKKLYE, and NFNK…QVKF. Residues 332 to 354 are disordered; that stretch reads KKKEKRSSDKENAPASFNKNAKS.

Interacts with snoRNA U3. Interacts with MPP10. Component of the ribosomal small subunit (SSU) processome composed of at least 40 protein subunits and snoRNA U3. In the absence of snoRNA3, forms a complex with other t-UTPs. This complex can associate with pre-18S ribosomal RNAs.

Its subcellular location is the nucleus. It localises to the nucleolus. Involved in nucleolar processing of pre-18S ribosomal RNA. Required for optimal pre-ribosomal RNA transcription by RNA polymerase I together with a subset of U3 proteins required for transcription (t-UTPs). In Saccharomyces cerevisiae (strain ATCC 204508 / S288c) (Baker's yeast), this protein is U3 small nucleolar RNA-associated protein 15 (UTP15).